The following is a 205-amino-acid chain: COMM domain-containing protein 8 (205 aa).

The region spanning 139-205 (SLSDFDWKMN…TFDQINEVSF (67 aa)) is the COMM domain.

This sequence belongs to the COMM domain-containing protein 8 family. In terms of assembly, component of the commander complex consisting of the CCC subcomplex and the retriever subcomplex. Component of the CCC subcomplex.

Its function is as follows. Scaffold protein in the commander complex that is essential for endosomal recycling of transmembrane cargos; the commander complex is composed of the CCC subcomplex and the retriever subcomplex. The chain is COMM domain-containing protein 8 (commd8) from Dictyostelium discoideum (Social amoeba).